The following is a 244-amino-acid chain: Phosphoadenosine 5'-phosphosulfate reductase (244 aa).

The active-site Nucleophile; cysteine thiosulfonate intermediate is the Cys239.

Belongs to the PAPS reductase family. CysH subfamily.

It localises to the cytoplasm. The catalysed reaction is [thioredoxin]-disulfide + sulfite + adenosine 3',5'-bisphosphate + 2 H(+) = [thioredoxin]-dithiol + 3'-phosphoadenylyl sulfate. Its pathway is sulfur metabolism; hydrogen sulfide biosynthesis; sulfite from sulfate: step 3/3. Functionally, catalyzes the formation of sulfite from phosphoadenosine 5'-phosphosulfate (PAPS) using thioredoxin as an electron donor. In Salmonella typhi, this protein is Phosphoadenosine 5'-phosphosulfate reductase.